The following is a 333-amino-acid chain: Dihydroorotate dehydrogenase (quinone) (333 aa).

FMN-binding positions include 56–60 (AGLDK) and threonine 80. Substrate is bound at residue lysine 60. Substrate is bound at residue 105–109 (NRMGF). Residues asparagine 133 and asparagine 166 each coordinate FMN. Asparagine 166 contacts substrate. Serine 169 serves as the catalytic Nucleophile. Residue asparagine 171 participates in substrate binding. 2 residues coordinate FMN: lysine 211 and threonine 239. 240–241 (NT) provides a ligand contact to substrate. Residues glycine 262, glycine 291, and 312–313 (YS) each bind FMN.

Belongs to the dihydroorotate dehydrogenase family. Type 2 subfamily. As to quaternary structure, monomer. FMN is required as a cofactor.

The protein resides in the cell membrane. The catalysed reaction is (S)-dihydroorotate + a quinone = orotate + a quinol. It participates in pyrimidine metabolism; UMP biosynthesis via de novo pathway; orotate from (S)-dihydroorotate (quinone route): step 1/1. Its function is as follows. Catalyzes the conversion of dihydroorotate to orotate with quinone as electron acceptor. The sequence is that of Dihydroorotate dehydrogenase (quinone) from Legionella pneumophila (strain Corby).